The following is a 168-amino-acid chain: MPRSRINGNFIDKTSSIVANILLRIIPTTSGEKKAFTYYRDGMSAQSEGNYAEALQNYYEATRPEIDPYDRSYILYNIGLIHTSNGEHTKALEYYFRALERNPFLPQAFNNMAVICHYRGEQAILQGDSEIAEAWFDQAAEYWKQAIALTPGNYIEAHNWLKITRRFE.

3 TPR repeats span residues 35 to 68 (AFTYYRDGMSAQSEGNYAEALQNYYEATRPEIDP), 72 to 105 (SYILYNIGLIHTSNGEHTKALEYYFRALERNPFL), and 120 to 153 (GEQAILQGDSEIAEAWFDQAAEYWKQAIALTPGN).

Belongs to the Ycf3 family.

The protein resides in the plastid. The protein localises to the chloroplast thylakoid membrane. Essential for the assembly of the photosystem I (PSI) complex. May act as a chaperone-like factor to guide the assembly of the PSI subunits. The chain is Photosystem I assembly protein Ycf3 from Phalaenopsis aphrodite subsp. formosana (Moth orchid).